The sequence spans 339 residues: Tetraacyldisaccharide 4'-kinase (339 aa).

62 to 69 (VAGGTGKT) lines the ATP pocket.

This sequence belongs to the LpxK family.

The enzyme catalyses a lipid A disaccharide + ATP = a lipid IVA + ADP + H(+). It participates in glycolipid biosynthesis; lipid IV(A) biosynthesis; lipid IV(A) from (3R)-3-hydroxytetradecanoyl-[acyl-carrier-protein] and UDP-N-acetyl-alpha-D-glucosamine: step 6/6. Its function is as follows. Transfers the gamma-phosphate of ATP to the 4'-position of a tetraacyldisaccharide 1-phosphate intermediate (termed DS-1-P) to form tetraacyldisaccharide 1,4'-bis-phosphate (lipid IVA). This chain is Tetraacyldisaccharide 4'-kinase, found in Xylella fastidiosa (strain 9a5c).